The following is a 178-amino-acid chain: Small ribosomal subunit protein uS5 (178 aa).

The S5 DRBM domain occupies F15–V78.

This sequence belongs to the universal ribosomal protein uS5 family. In terms of assembly, part of the 30S ribosomal subunit. Contacts proteins S4 and S8.

In terms of biological role, with S4 and S12 plays an important role in translational accuracy. Located at the back of the 30S subunit body where it stabilizes the conformation of the head with respect to the body. This chain is Small ribosomal subunit protein uS5, found in Thermotoga neapolitana (strain ATCC 49049 / DSM 4359 / NBRC 107923 / NS-E).